A 67-amino-acid polypeptide reads, in one-letter code: Beta-defensin 103A (67 aa).

A signal peptide spans 1-22 (MRIHFLLFALLFLFLMPVPGNG). 3 disulfide bridges follow: cysteine 33–cysteine 62, cysteine 40–cysteine 55, and cysteine 45–cysteine 63.

It belongs to the beta-defensin family.

The protein resides in the secreted. Its function is as follows. Exhibits antimicrobial activity against Gram-positive and Gram-negative bacteria. The chain is Beta-defensin 103A (DEFB103A) from Equus caballus (Horse).